The chain runs to 159 residues: MGKANKKAKAPSATIAQNRKARHEYHLEEHFEAGLVLEGWEVKSLRAGKGNLTEAYVLLKNGEAFLFGARFEPLNTASTHVNPDPTRTRKLLLHRRELGRVFGGVQKDGFTCVPVSLYWKKGFAKCDIALAKGKQKFDKRATEKERDWNRQKQRVLRQR.

Positions 140 to 150 are enriched in basic and acidic residues; the sequence is RATEKERDWNR. Positions 140–159 are disordered; sequence RATEKERDWNRQKQRVLRQR.

This sequence belongs to the SmpB family.

The protein localises to the cytoplasm. Functionally, required for rescue of stalled ribosomes mediated by trans-translation. Binds to transfer-messenger RNA (tmRNA), required for stable association of tmRNA with ribosomes. tmRNA and SmpB together mimic tRNA shape, replacing the anticodon stem-loop with SmpB. tmRNA is encoded by the ssrA gene; the 2 termini fold to resemble tRNA(Ala) and it encodes a 'tag peptide', a short internal open reading frame. During trans-translation Ala-aminoacylated tmRNA acts like a tRNA, entering the A-site of stalled ribosomes, displacing the stalled mRNA. The ribosome then switches to translate the ORF on the tmRNA; the nascent peptide is terminated with the 'tag peptide' encoded by the tmRNA and targeted for degradation. The ribosome is freed to recommence translation, which seems to be the essential function of trans-translation. This is SsrA-binding protein from Alcanivorax borkumensis (strain ATCC 700651 / DSM 11573 / NCIMB 13689 / SK2).